Consider the following 155-residue polypeptide: Isotocin-neurophysin IT 1 (155 aa).

A signal peptide spans 1–19 (MTGTAISVCLLFLLSVCSA). An intrachain disulfide couples Cys-20 to Cys-25. Gly-28 carries the post-translational modification Glycine amide. Disulfide bonds link Cys-41–Cys-85, Cys-44–Cys-58, Cys-52–Cys-75, Cys-59–Cys-65, Cys-92–Cys-105, Cys-99–Cys-117, and Cys-106–Cys-111.

The protein belongs to the vasopressin/oxytocin family. Post-translationally, seven disulfide bonds are present in neurophysin.

Isotocin causes contraction of smooth muscles. The chain is Isotocin-neurophysin IT 1 from Takifugu rubripes (Japanese pufferfish).